We begin with the raw amino-acid sequence, 340 residues long: Lipopolysaccharide core biosynthesis glycosyltransferase LpsE (340 aa).

Belongs to the glycosyltransferase group 1 family. Glycosyltransferase 4 subfamily.

It participates in bacterial outer membrane biogenesis; LPS core biosynthesis. This chain is Lipopolysaccharide core biosynthesis glycosyltransferase LpsE (lpsE), found in Rhizobium meliloti (strain 1021) (Ensifer meliloti).